The chain runs to 312 residues: Porphobilinogen deaminase (312 aa).

The residue at position 243 (Cys-243) is an S-(dipyrrolylmethanemethyl)cysteine.

Belongs to the HMBS family. Monomer. The cofactor is dipyrromethane.

The catalysed reaction is 4 porphobilinogen + H2O = hydroxymethylbilane + 4 NH4(+). The protein operates within porphyrin-containing compound metabolism; protoporphyrin-IX biosynthesis; coproporphyrinogen-III from 5-aminolevulinate: step 2/4. In terms of biological role, tetrapolymerization of the monopyrrole PBG into the hydroxymethylbilane pre-uroporphyrinogen in several discrete steps. In Vibrio parahaemolyticus serotype O3:K6 (strain RIMD 2210633), this protein is Porphobilinogen deaminase.